A 1047-amino-acid polypeptide reads, in one-letter code: Ribonucleoside-diphosphate reductase subunit alpha (1047 aa).

ATP-cone domains are found at residues 9–111 (CTIV…KAHR), 118–219 (LSVI…ARVR), and 237–327 (FEVL…EALD). Substrate-binding positions include Thr-442, 457 to 458 (SC), Gly-486, 670 to 674 (NLCTE), and 857 to 861 (PTATI). A disulfide bond links Cys-458 and Cys-687. The Proton acceptor role is filled by Asn-670. Cys-672 acts as the Cysteine radical intermediate in catalysis. Glu-674 serves as the catalytic Proton acceptor.

It belongs to the ribonucleoside diphosphate reductase large chain family. Tetramer of two alpha and two beta subunits.

The catalysed reaction is a 2'-deoxyribonucleoside 5'-diphosphate + [thioredoxin]-disulfide + H2O = a ribonucleoside 5'-diphosphate + [thioredoxin]-dithiol. With respect to regulation, under complex allosteric control mediated by deoxynucleoside triphosphates and ATP binding. The type of nucleotide bound at the specificity site determines substrate preference. It seems probable that ATP makes the enzyme reduce CDP and UDP, dGTP favors ADP reduction and dTTP favors GDP reduction. Its function is as follows. Provides the precursors necessary for DNA synthesis. Catalyzes the biosynthesis of deoxyribonucleotides from the corresponding ribonucleotides. This chain is Ribonucleoside-diphosphate reductase subunit alpha (nrdA), found in Chlamydia muridarum (strain MoPn / Nigg).